We begin with the raw amino-acid sequence, 333 residues long: Ephrin-B2 (333 aa).

Positions 1-27 (MAVRRDSVWKYCWGVLMVLCRTAISKS) are cleaved as a signal peptide. The 137-residue stretch at 28–164 (IVLEPIYWNS…TRAMKILMKV (137 aa)) folds into the Ephrin RBD domain. Residues 28 to 229 (IVLEPIYWNS…ILGSEVALFA (202 aa)) lie on the Extracellular side of the membrane. Asn36 carries an N-linked (GlcNAc...) asparagine glycan. Cystine bridges form between Cys62-Cys101 and Cys89-Cys153. An N-linked (GlcNAc...) asparagine glycan is attached at Asn139. The tract at residues 165–213 (GQDASSAGSTRNKDPTRRPELEAGTNGRSSTTSPFVKPNPGSSTDGNSA) is disordered. Over residues 175–185 (RNKDPTRRPEL) the composition is skewed to basic and acidic residues. The segment covering 190 to 213 (NGRSSTTSPFVKPNPGSSTDGNSA) has biased composition (polar residues). A helical transmembrane segment spans residues 230-250 (GIASGCIIFIVIIITLVVLLL). Topologically, residues 251 to 333 (KYRRRHRKHS…QSPANIYYKV (83 aa)) are cytoplasmic. Ser260 bears the Phosphoserine mark. Thr274 is modified (phosphothreonine). Arg277 bears the Omega-N-methylarginine mark. The short motif at 331–333 (YKV) is the PDZ-binding element.

This sequence belongs to the ephrin family. As to quaternary structure, interacts with PDZRN3. Binds to the receptor tyrosine kinases EPHA4, EPHB4 and EPHA3. In terms of assembly, (Microbial infection) Interacts with Hendra virus and Nipah virus G protein. Post-translationally, inducible phosphorylation of tyrosine residues in the cytoplasmic domain. In terms of tissue distribution, lung and kidney.

It localises to the cell membrane. It is found in the cell junction. Its subcellular location is the adherens junction. Functionally, cell surface transmembrane ligand for Eph receptors, a family of receptor tyrosine kinases which are crucial for migration, repulsion and adhesion during neuronal, vascular and epithelial development. Binds promiscuously Eph receptors residing on adjacent cells, leading to contact-dependent bidirectional signaling into neighboring cells. The signaling pathway downstream of the receptor is referred to as forward signaling while the signaling pathway downstream of the ephrin ligand is referred to as reverse signaling. Binds to receptor tyrosine kinase including EPHA4, EPHA3 and EPHB4. Together with EPHB4 plays a central role in heart morphogenesis and angiogenesis through regulation of cell adhesion and cell migration. EPHB4-mediated forward signaling controls cellular repulsion and segregation from EFNB2-expressing cells. May play a role in constraining the orientation of longitudinally projecting axons. (Microbial infection) Acts as a receptor for Hendra virus and Nipah virus. The chain is Ephrin-B2 (EFNB2) from Homo sapiens (Human).